The chain runs to 130 residues: MSKQLRQSTKKTKRRLYRGVIHIQTSYNNTIITVTNIKGDVMCWSSAGSSGLKGKRKSTAYAAKLAAANAARKAIRDFSLREAKVLITGPGPARETAIHEIYKAGIKLTVIREKSTVPHNGCRPPKRRRI.

Belongs to the universal ribosomal protein uS11 family. In terms of assembly, part of the 30S ribosomal subunit.

It localises to the plastid. The protein resides in the chloroplast. This Oedogonium cardiacum (Filamentous green alga) protein is Small ribosomal subunit protein uS11c.